The sequence spans 226 residues: Ribonuclease 3 (226 aa).

The RNase III domain maps to 6–128 (INRLQRKLGY…LIGGVFLDSD (123 aa)). Glu-41 contacts Mg(2+). The active site involves Asp-45. Residues Asp-114 and Glu-117 each coordinate Mg(2+). Glu-117 is a catalytic residue. One can recognise a DRBM domain in the interval 155–225 (DPKTRLQEYL…AEQALKMLEL (71 aa)).

Belongs to the ribonuclease III family. In terms of assembly, homodimer. Requires Mg(2+) as cofactor.

It is found in the cytoplasm. It catalyses the reaction Endonucleolytic cleavage to 5'-phosphomonoester.. Digests double-stranded RNA. Involved in the processing of primary rRNA transcript to yield the immediate precursors to the large and small rRNAs (23S and 16S). Processes some mRNAs, and tRNAs when they are encoded in the rRNA operon. Processes pre-crRNA and tracrRNA of type II CRISPR loci if present in the organism. The sequence is that of Ribonuclease 3 from Enterobacter sp. (strain 638).